A 448-amino-acid chain; its full sequence is Trigger factor (448 aa).

The PPIase FKBP-type domain occupies 161 to 246 (GDQVTIDFEG…VHKVAGKQLP (86 aa)). Residues 428 to 448 (ALQAAQQQEGAEEEAQEETSA) form a disordered region. Acidic residues predominate over residues 437-448 (GAEEEAQEETSA).

It belongs to the FKBP-type PPIase family. Tig subfamily.

Its subcellular location is the cytoplasm. It catalyses the reaction [protein]-peptidylproline (omega=180) = [protein]-peptidylproline (omega=0). In terms of biological role, involved in protein export. Acts as a chaperone by maintaining the newly synthesized protein in an open conformation. Functions as a peptidyl-prolyl cis-trans isomerase. This chain is Trigger factor, found in Chromohalobacter salexigens (strain ATCC BAA-138 / DSM 3043 / CIP 106854 / NCIMB 13768 / 1H11).